The sequence spans 1108 residues: Ubiquitin carboxyl-terminal hydrolase 5 (1108 aa).

The 133-residue stretch at 55 to 187 folds into the MATH domain; it reads FQRFTWHIKS…DGALLLTAYV (133 aa). Residues C120 and C222 each act as nucleophile in the active site. The 316-residue stretch at 213–528 folds into the USP domain; it reads VGLKNQGATC…SAYMLLYLRK (316 aa). Catalysis depends on H464, which acts as the Proton acceptor.

The protein belongs to the peptidase C19 family.

It localises to the nucleus. It catalyses the reaction Thiol-dependent hydrolysis of ester, thioester, amide, peptide and isopeptide bonds formed by the C-terminal Gly of ubiquitin (a 76-residue protein attached to proteins as an intracellular targeting signal).. Functionally, hydrolase that deubiquitinates target proteins. Cleaves the UBL propeptide in sde2. This chain is Ubiquitin carboxyl-terminal hydrolase 5 (ubp5), found in Schizosaccharomyces pombe (strain 972 / ATCC 24843) (Fission yeast).